Consider the following 196-residue polypeptide: Pyridoxal 5'-phosphate synthase subunit PdxT (196 aa).

An L-glutamine-binding site is contributed by 47–49 (GES). Catalysis depends on C79, which acts as the Nucleophile. Residues R106 and 134 to 135 (IR) contribute to the L-glutamine site. Residues H170 and E172 each act as charge relay system in the active site.

It belongs to the glutaminase PdxT/SNO family. As to quaternary structure, in the presence of PdxS, forms a dodecamer of heterodimers. Only shows activity in the heterodimer.

The enzyme catalyses aldehydo-D-ribose 5-phosphate + D-glyceraldehyde 3-phosphate + L-glutamine = pyridoxal 5'-phosphate + L-glutamate + phosphate + 3 H2O + H(+). It carries out the reaction L-glutamine + H2O = L-glutamate + NH4(+). The protein operates within cofactor biosynthesis; pyridoxal 5'-phosphate biosynthesis. Its function is as follows. Catalyzes the hydrolysis of glutamine to glutamate and ammonia as part of the biosynthesis of pyridoxal 5'-phosphate. The resulting ammonia molecule is channeled to the active site of PdxS. The chain is Pyridoxal 5'-phosphate synthase subunit PdxT from Bacillus velezensis (strain DSM 23117 / BGSC 10A6 / LMG 26770 / FZB42) (Bacillus amyloliquefaciens subsp. plantarum).